The sequence spans 100 residues: Putative sodium channel toxin Ts26 (100 aa).

The signal sequence occupies residues 1-22 (MVKSAMKIVILILFVLLIRVES). The LCN-type CS-alpha/beta domain occupies 24-92 (RNGYPDISDG…VMDTTIEYCE (69 aa)). 4 cysteine pairs are disulfide-bonded: C38/C64, C50/C69, C54/C71, and C65/C91.

This sequence belongs to the long (4 C-C) scorpion toxin superfamily. Sodium channel inhibitor family. In terms of tissue distribution, expressed by the venom gland.

It localises to the secreted. Functionally, putative sodium channel toxin. This chain is Putative sodium channel toxin Ts26, found in Tityus serrulatus (Brazilian scorpion).